The following is a 355-amino-acid chain: Guanine nucleotide-binding protein G(i) subunit alpha (355 aa).

Glycine 2 carries the N-myristoyl glycine lipid modification. A lipid anchor (S-palmitoyl cysteine) is attached at cysteine 3. Residues 33–355 enclose the G-alpha domain; that stretch reads REVKLLLLGA…KNNLKDCGLF (323 aa). The tract at residues 36–49 is G1 motif; the sequence is KLLLLGAGESGKST. GTP is bound by residues 41 to 48, 176 to 182, 201 to 205, 270 to 273, and alanine 327; these read GAGESGKS, LRTRVKT, DVGGQ, and NKKD. Serine 48 and threonine 182 together coordinate Mg(2+). Residues 174-182 form a G2 motif region; that stretch reads DVLRTRVKT. The segment at 197–206 is G3 motif; that stretch reads FKLFDVGGQR. Residues 266 to 273 are G4 motif; that stretch reads ILFLNKKD. The segment at 325-330 is G5 motif; it reads TCATDT.

The protein belongs to the G-alpha family. G(i/o/t/z) subfamily. In terms of assembly, g proteins are composed of 3 units; alpha, beta and gamma. The alpha chain contains the guanine nucleotide binding site.

Functionally, guanine nucleotide-binding proteins (G proteins) are involved as modulators or transducers in various transmembrane signaling systems. The chain is Guanine nucleotide-binding protein G(i) subunit alpha from Homarus americanus (American lobster).